Here is a 37-residue protein sequence, read N- to C-terminus: Neuropeptide Y1-like conopeptide (37 aa).

Phe37 carries the phenylalanine amide modification.

Belongs to the NPY family. As to expression, expressed by the venom duct.

Its subcellular location is the secreted. Its function is as follows. Causes hyperactivity such as jumping, rapid circling and tail flicking, when intraventricularly injected into mice brain. The chain is Neuropeptide Y1-like conopeptide from Conus betulinus (Beech cone).